The chain runs to 553 residues: Formate--tetrahydrofolate ligase (553 aa).

An ATP-binding site is contributed by 63 to 70 (TPAGEGKS).

The protein belongs to the formate--tetrahydrofolate ligase family.

The enzyme catalyses (6S)-5,6,7,8-tetrahydrofolate + formate + ATP = (6R)-10-formyltetrahydrofolate + ADP + phosphate. It functions in the pathway one-carbon metabolism; tetrahydrofolate interconversion. The sequence is that of Formate--tetrahydrofolate ligase from Limosilactobacillus fermentum (strain NBRC 3956 / LMG 18251) (Lactobacillus fermentum).